We begin with the raw amino-acid sequence, 171 residues long: Peptide methionine sulfoxide reductase MsrA (171 aa).

Cys13 is an active-site residue.

It belongs to the MsrA Met sulfoxide reductase family.

The enzyme catalyses L-methionyl-[protein] + [thioredoxin]-disulfide + H2O = L-methionyl-(S)-S-oxide-[protein] + [thioredoxin]-dithiol. The catalysed reaction is [thioredoxin]-disulfide + L-methionine + H2O = L-methionine (S)-S-oxide + [thioredoxin]-dithiol. Has an important function as a repair enzyme for proteins that have been inactivated by oxidation. Catalyzes the reversible oxidation-reduction of methionine sulfoxide in proteins to methionine. The polypeptide is Peptide methionine sulfoxide reductase MsrA (Mycolicibacterium paratuberculosis (strain ATCC BAA-968 / K-10) (Mycobacterium paratuberculosis)).